The chain runs to 458 residues: 3-isopropylmalate dehydratase large subunit (458 aa).

Residues Cys339, Cys399, and Cys402 each coordinate [4Fe-4S] cluster.

It belongs to the aconitase/IPM isomerase family. LeuC type 1 subfamily. As to quaternary structure, heterodimer of LeuC and LeuD. Requires [4Fe-4S] cluster as cofactor.

It catalyses the reaction (2R,3S)-3-isopropylmalate = (2S)-2-isopropylmalate. It functions in the pathway amino-acid biosynthesis; L-leucine biosynthesis; L-leucine from 3-methyl-2-oxobutanoate: step 2/4. Its function is as follows. Catalyzes the isomerization between 2-isopropylmalate and 3-isopropylmalate, via the formation of 2-isopropylmaleate. This is 3-isopropylmalate dehydratase large subunit from Lactococcus lactis subsp. cremoris (strain SK11).